The chain runs to 549 residues: Oxygen-dependent choline dehydrogenase (549 aa).

FAD is bound at residue Asp-4–Glu-33. The Proton acceptor role is filled by His-465.

This sequence belongs to the GMC oxidoreductase family. Requires FAD as cofactor.

The enzyme catalyses choline + A = betaine aldehyde + AH2. It catalyses the reaction betaine aldehyde + NAD(+) + H2O = glycine betaine + NADH + 2 H(+). It participates in amine and polyamine biosynthesis; betaine biosynthesis via choline pathway; betaine aldehyde from choline (cytochrome c reductase route): step 1/1. In terms of biological role, involved in the biosynthesis of the osmoprotectant glycine betaine. Catalyzes the oxidation of choline to betaine aldehyde and betaine aldehyde to glycine betaine at the same rate. The polypeptide is Oxygen-dependent choline dehydrogenase (Rhizobium johnstonii (strain DSM 114642 / LMG 32736 / 3841) (Rhizobium leguminosarum bv. viciae)).